The primary structure comprises 116 residues: Small ribosomal subunit protein bS16 (116 aa).

A disordered region spans residues 88-116; the sequence is RNNPKAAVPGKRMAELAKKKADRAAASAE. Residues 99–110 are compositionally biased toward basic and acidic residues; sequence RMAELAKKKADR.

It belongs to the bacterial ribosomal protein bS16 family.

The protein is Small ribosomal subunit protein bS16 of Cereibacter sphaeroides (strain ATCC 17029 / ATH 2.4.9) (Rhodobacter sphaeroides).